The sequence spans 967 residues: Translation initiation factor IF-2 (967 aa).

Residues 34–363 (ASSTVEPPVA…APAVGGVSVP (330 aa)) form a disordered region. Composition is skewed to low complexity over residues 51-96 (PAGG…GNAA) and 103-154 (ASEA…TPGP). Residues 184 to 196 (RSEGGAQRGGPRP) are compositionally biased toward gly residues. Residues 197–206 (GGQQRSGKPG) are compositionally biased toward low complexity. Over residues 300 to 333 (PRRGGGPGGGPGGGGGFRGRGGRGGTQGAFGRGG) the composition is skewed to gly residues. A compositionally biased stretch (basic residues) spans 334 to 345 (ARGKHRKSKRAK). A tr-type G domain is found at 460-632 (PRPPVVTVMG…IVLTADGALE (173 aa)). The segment at 469 to 476 (GHVDHGKT) is G1. GTP is bound at residue 469–476 (GHVDHGKT). Residues 494–498 (GITQH) are G2. The segment at 519–522 (DTPG) is G3. GTP is bound by residues 519–523 (DTPGH) and 573–576 (NKVD). Positions 573-576 (NKVD) are G4. A G5 region spans residues 609–611 (SAR).

Belongs to the TRAFAC class translation factor GTPase superfamily. Classic translation factor GTPase family. IF-2 subfamily.

It is found in the cytoplasm. One of the essential components for the initiation of protein synthesis. Protects formylmethionyl-tRNA from spontaneous hydrolysis and promotes its binding to the 30S ribosomal subunits. Also involved in the hydrolysis of GTP during the formation of the 70S ribosomal complex. In Kocuria rhizophila (strain ATCC 9341 / DSM 348 / NBRC 103217 / DC2201), this protein is Translation initiation factor IF-2.